The following is a 257-amino-acid chain: 4-chloro-allylglycine synthase (257 aa).

Fe cation contacts are provided by glutamate 112, histidine 119, glutamate 173, histidine 203, glutamate 207, and histidine 210.

Fe(2+) is required as a cofactor.

It carries out the reaction 4-chloro-L-lysine + AH2 + O2 = L-2-amino-4-chloropent-4-enoate + formaldehyde + A + NH4(+) + H2O. It functions in the pathway amino-acid metabolism. The protein operates within antibiotic biosynthesis. In terms of biological role, involved in the biosynthesis of terminal alkyne-containing amino acids such as L-propargylglycine (Pra) and L-beta-ethynylserine, that are produced as antibiotics by S.cattleya. Catalyzes an oxidative C-C bond cleavage in 4-chloro-L-lysine to form 4-chloro-allyl-L-glycine (also named L-2-amino-4-chloropent-4-enoate), with release of formaldehyde and ammonia. Is also able to react with L-lysine directly to produce allylglycine in vitro. The sequence is that of 4-chloro-allylglycine synthase from Streptantibioticus cattleyicolor (strain ATCC 35852 / DSM 46488 / JCM 4925 / NBRC 14057 / NRRL 8057) (Streptomyces cattleya).